Here is a 327-residue protein sequence, read N- to C-terminus: uncharacterized protein (327 aa).

Residues Leu12–Gly32 traverse the membrane as a helical segment. The segment at Ala149–Gly170 is disordered. Over residues Glu157 to Asp167 the composition is skewed to acidic residues. Residues Glu162 to Glu227 adopt a coiled-coil conformation.

Its subcellular location is the membrane. This is an uncharacterized protein from Encephalitozoon cuniculi (strain GB-M1) (Microsporidian parasite).